A 530-amino-acid chain; its full sequence is Proline--tRNA ligase, cytoplasmic (530 aa).

Belongs to the class-II aminoacyl-tRNA synthetase family.

Its subcellular location is the cytoplasm. The protein resides in the cytosol. The enzyme catalyses tRNA(Pro) + L-proline + ATP = L-prolyl-tRNA(Pro) + AMP + diphosphate. Catalyzes the attachment of proline to tRNA(Pro) in a two-step reaction: proline is first activated by ATP to form Pro-AMP and then transferred to the acceptor end of tRNA(Pro). The polypeptide is Proline--tRNA ligase, cytoplasmic (Arabidopsis thaliana (Mouse-ear cress)).